The sequence spans 73 residues: Translational regulator CsrA (73 aa).

Belongs to the CsrA/RsmA family. In terms of assembly, homodimer; the beta-strands of each monomer intercalate to form a hydrophobic core, while the alpha-helices form wings that extend away from the core.

The protein resides in the cytoplasm. Its function is as follows. A translational regulator that binds mRNA to regulate translation initiation and/or mRNA stability. Usually binds in the 5'-UTR at or near the Shine-Dalgarno sequence preventing ribosome-binding, thus repressing translation. Its main target seems to be the major flagellin gene, while its function is anatagonized by FliW. In Thermosipho africanus (strain TCF52B), this protein is Translational regulator CsrA.